Here is a 525-residue protein sequence, read N- to C-terminus: Bifunctional purine biosynthesis protein PurH (525 aa).

One can recognise an MGS-like domain in the interval 1 to 149 (MSDPVIKRAL…KNNESVTVVT (149 aa)).

Belongs to the PurH family.

The enzyme catalyses (6R)-10-formyltetrahydrofolate + 5-amino-1-(5-phospho-beta-D-ribosyl)imidazole-4-carboxamide = 5-formamido-1-(5-phospho-D-ribosyl)imidazole-4-carboxamide + (6S)-5,6,7,8-tetrahydrofolate. It catalyses the reaction IMP + H2O = 5-formamido-1-(5-phospho-D-ribosyl)imidazole-4-carboxamide. It functions in the pathway purine metabolism; IMP biosynthesis via de novo pathway; 5-formamido-1-(5-phospho-D-ribosyl)imidazole-4-carboxamide from 5-amino-1-(5-phospho-D-ribosyl)imidazole-4-carboxamide (10-formyl THF route): step 1/1. Its pathway is purine metabolism; IMP biosynthesis via de novo pathway; IMP from 5-formamido-1-(5-phospho-D-ribosyl)imidazole-4-carboxamide: step 1/1. This Prosthecochloris aestuarii (strain DSM 271 / SK 413) protein is Bifunctional purine biosynthesis protein PurH.